The sequence spans 380 residues: MTLIEEILGGKSGESVVRRVDLVYAHDGTMPLIIEAFNKVFATVRARAYIFFDHVYPAPTVKIANLQKEIRDFAKRHRIPVIEGQGISHQLVVEMGLTENSKIVVGADSHTPTLGALGVFAVGMGATDVAVILGLGKTWFRIPESVGVILEGNPSRYVMATDVILHLLSLLKDYDMNYRAVEFFNVPFSLDERLTLTNFVVEANAKTGIIGEEYTGDGYVKELEIELNSLNPLVAKPHNPANVVPVEEVEGTKIDQVFIGSCTNGRFEQISKAAEILEGEKVAVRTIVGPASMNVYKRMIEEGVARKLIEAGAVILPPGCGPCLGRHMGVVGDGEIVLSTTNRNFRGRMGSPNAQIYLSNPITAAVSALYGEITNPEGAI.

Positions 262, 320, and 323 each coordinate [4Fe-4S] cluster.

It belongs to the aconitase/IPM isomerase family. LeuC type 2 subfamily. Heterodimer of LeuC and LeuD. The cofactor is [4Fe-4S] cluster.

The catalysed reaction is (2R,3S)-3-isopropylmalate = (2S)-2-isopropylmalate. It participates in amino-acid biosynthesis; L-leucine biosynthesis; L-leucine from 3-methyl-2-oxobutanoate: step 2/4. In terms of biological role, catalyzes the isomerization between 2-isopropylmalate and 3-isopropylmalate, via the formation of 2-isopropylmaleate. In Pyrococcus furiosus (strain ATCC 43587 / DSM 3638 / JCM 8422 / Vc1), this protein is 3-isopropylmalate dehydratase large subunit 2.